Consider the following 300-residue polypeptide: Cation-efflux pump FieF (300 aa).

Transmembrane regions (helical) follow at residues Ala-12–Trp-32, Ile-39–Val-59, Ala-82–Ile-102, and Pro-114–Phe-134. The Zn(2+) site is built by Asp-45 and Asp-49. 2 residues coordinate Zn(2+): His-153 and Asp-157. Transmembrane regions (helical) follow at residues Ser-156–His-176 and Ala-178–Gly-198.

It belongs to the cation diffusion facilitator (CDF) transporter (TC 2.A.4) family. FieF subfamily. As to quaternary structure, homodimer.

Its subcellular location is the cell inner membrane. It carries out the reaction Zn(2+)(in) + H(+)(out) = Zn(2+)(out) + H(+)(in). It catalyses the reaction Cd(2+)(in) + H(+)(out) = Cd(2+)(out) + H(+)(in). The catalysed reaction is Fe(2+)(in) + H(+)(out) = Fe(2+)(out) + H(+)(in). Functionally, divalent metal cation transporter which exports Zn(2+), Cd(2+) and possibly Fe(2+). May be involved in zinc and iron detoxification by efflux. The sequence is that of Cation-efflux pump FieF from Escherichia coli O7:K1 (strain IAI39 / ExPEC).